Consider the following 362-residue polypeptide: Variable large protein 25 (362 aa).

A signal peptide spans 1–26 (MRKRISAIINKLNISIMMMIVVLMIG). C27 is lipidated: N-palmitoyl cysteine. C27 is lipidated: S-diacylglycerol cysteine.

Belongs to the variable large protein (Vlp) family. Alpha subfamily.

It localises to the cell outer membrane. Its function is as follows. The Vlp and Vsp proteins are antigenically distinct proteins, only one vlp or vsp gene is transcriptionally active at any one time. Switching between these genes is a mechanism of host immune response evasion. This Borrelia hermsii protein is Variable large protein 25.